We begin with the raw amino-acid sequence, 308 residues long: 4-hydroxy-3-methylbut-2-enyl diphosphate reductase (308 aa).

Position 12 (C12) interacts with [4Fe-4S] cluster. 2 residues coordinate (2E)-4-hydroxy-3-methylbut-2-enyl diphosphate: H43 and H77. Dimethylallyl diphosphate contacts are provided by H43 and H77. The isopentenyl diphosphate site is built by H43 and H77. C99 is a binding site for [4Fe-4S] cluster. Residue H127 participates in (2E)-4-hydroxy-3-methylbut-2-enyl diphosphate binding. A dimethylallyl diphosphate-binding site is contributed by H127. H127 is a binding site for isopentenyl diphosphate. E129 functions as the Proton donor in the catalytic mechanism. T167 lines the (2E)-4-hydroxy-3-methylbut-2-enyl diphosphate pocket. C197 contacts [4Fe-4S] cluster. Positions 225, 226, 227, and 269 each coordinate (2E)-4-hydroxy-3-methylbut-2-enyl diphosphate. Dimethylallyl diphosphate contacts are provided by S225, S226, N227, and S269. Isopentenyl diphosphate is bound by residues S225, S226, N227, and S269.

The protein belongs to the IspH family. [4Fe-4S] cluster is required as a cofactor.

It catalyses the reaction isopentenyl diphosphate + 2 oxidized [2Fe-2S]-[ferredoxin] + H2O = (2E)-4-hydroxy-3-methylbut-2-enyl diphosphate + 2 reduced [2Fe-2S]-[ferredoxin] + 2 H(+). The enzyme catalyses dimethylallyl diphosphate + 2 oxidized [2Fe-2S]-[ferredoxin] + H2O = (2E)-4-hydroxy-3-methylbut-2-enyl diphosphate + 2 reduced [2Fe-2S]-[ferredoxin] + 2 H(+). The protein operates within isoprenoid biosynthesis; dimethylallyl diphosphate biosynthesis; dimethylallyl diphosphate from (2E)-4-hydroxy-3-methylbutenyl diphosphate: step 1/1. It functions in the pathway isoprenoid biosynthesis; isopentenyl diphosphate biosynthesis via DXP pathway; isopentenyl diphosphate from 1-deoxy-D-xylulose 5-phosphate: step 6/6. In terms of biological role, catalyzes the conversion of 1-hydroxy-2-methyl-2-(E)-butenyl 4-diphosphate (HMBPP) into a mixture of isopentenyl diphosphate (IPP) and dimethylallyl diphosphate (DMAPP). Acts in the terminal step of the DOXP/MEP pathway for isoprenoid precursor biosynthesis. The polypeptide is 4-hydroxy-3-methylbut-2-enyl diphosphate reductase (Wolbachia pipientis subsp. Culex pipiens (strain wPip)).